Consider the following 475-residue polypeptide: Chromosomal replication initiator protein DnaA (475 aa).

The domain I, interacts with DnaA modulators stretch occupies residues 1–73 (MTNSEQERWS…LSCWQAEMPE (73 aa)). The interval 73 to 131 (EVHRIDLSVRTAMRCATPAKEAPVAVEARRAERGDAKPADTRAPVMTPVAASHDALGGS) is domain II. The segment at 132–354 (PLDPRLTFAS…GAINRLLAHS (223 aa)) is domain III, AAA+ region. Positions 179, 181, 182, and 183 each coordinate ATP. The tract at residues 355-475 (KLNNQPVTLD…VEALKRQLQD (121 aa)) is domain IV, binds dsDNA.

It belongs to the DnaA family. Oligomerizes as a right-handed, spiral filament on DNA at oriC.

It is found in the cytoplasm. Functionally, plays an essential role in the initiation and regulation of chromosomal replication. ATP-DnaA binds to the origin of replication (oriC) to initiate formation of the DNA replication initiation complex once per cell cycle. Binds the DnaA box (a 9 base pair repeat at the origin) and separates the double-stranded (ds)DNA. Forms a right-handed helical filament on oriC DNA; dsDNA binds to the exterior of the filament while single-stranded (ss)DNA is stabiized in the filament's interior. The ATP-DnaA-oriC complex binds and stabilizes one strand of the AT-rich DNA unwinding element (DUE), permitting loading of DNA polymerase. After initiation quickly degrades to an ADP-DnaA complex that is not apt for DNA replication. Binds acidic phospholipids. This is Chromosomal replication initiator protein DnaA from Bradyrhizobium sp. (strain BTAi1 / ATCC BAA-1182).